Consider the following 513-residue polypeptide: Putative ATP-dependent RNA helicase QP509L (513 aa).

The Helicase ATP-binding domain occupies 110-262 (KKLLSPYGRF…KIIIHHLGQP (153 aa)). Residue 123-130 (LNTGLGKT) participates in ATP binding. The DEAH box motif lies at 215–218 (DEAH).

It belongs to the DEAD box helicase family. DEAH subfamily.

The catalysed reaction is ATP + H2O = ADP + phosphate + H(+). This African swine fever virus (isolate Tick/South Africa/Pretoriuskop Pr4/1996) (ASFV) protein is Putative ATP-dependent RNA helicase QP509L.